The following is an 872-amino-acid chain: Leucine--tRNA ligase (872 aa).

Residues 42–52 (PYPSGKLHMGH) carry the 'HIGH' region motif. Residues 632-636 (KMSKS) carry the 'KMSKS' region motif. Lys635 contacts ATP.

Belongs to the class-I aminoacyl-tRNA synthetase family.

It is found in the cytoplasm. It carries out the reaction tRNA(Leu) + L-leucine + ATP = L-leucyl-tRNA(Leu) + AMP + diphosphate. In Chromobacterium violaceum (strain ATCC 12472 / DSM 30191 / JCM 1249 / CCUG 213 / NBRC 12614 / NCIMB 9131 / NCTC 9757 / MK), this protein is Leucine--tRNA ligase.